Reading from the N-terminus, the 440-residue chain is Chitinase-like protein Idgf2 (440 aa).

The N-terminal stretch at 1–20 (MKAWIWFTFVACLFAASTEA) is a signal peptide. A GH18 domain is found at 22–440 (SNLVCYYDSS…PILRAIKYRL (419 aa)). A disulfide bridge links Cys-26 with Cys-53. A glycan (N-linked (GlcNAc...) asparagine) is linked at Asn-220. The cysteines at positions 342 and 425 are disulfide-linked.

The protein belongs to the glycosyl hydrolase 18 family. IDGF subfamily. Glycosylated. As to expression, primarily expressed in yolk cells and fat body. In larvae, it is expressed in the imaginal ring and weakly expressed in imaginal disks. More strongly expressed than Idgf1 and Idgf3.

It localises to the secreted. In terms of biological role, cooperates with insulin-like peptides to stimulate the proliferation, polarization and motility of imaginal disk cells. May act by stabilizing the binding of insulin-like peptides to its receptor through a simultaneous interaction with both molecules to form a multiprotein signaling complex. The chain is Chitinase-like protein Idgf2 (Idgf2) from Drosophila melanogaster (Fruit fly).